The following is a 514-amino-acid chain: Thymus-specific serine protease (514 aa).

Residues methionine 1–alanine 24 form the signal peptide. 2 N-linked (GlcNAc...) asparagine glycosylation sites follow: asparagine 70 and asparagine 172. The active-site Charge relay system is the serine 185. N-linked (GlcNAc...) asparagine glycosylation is present at asparagine 321. Active-site charge relay system residues include aspartate 447 and histidine 472.

This sequence belongs to the peptidase S28 family. Expressed predominantly in cortical thymic epithelial cells.

Its subcellular location is the cytoplasmic vesicle. In terms of biological role, protease that may play a role in T-cell development. In Homo sapiens (Human), this protein is Thymus-specific serine protease (PRSS16).